We begin with the raw amino-acid sequence, 408 residues long: 4-O-methyl-glucuronoyl methylesterase 1 (408 aa).

A signal peptide spans 1-19 (MASSSRFAALLLLALPALA). 3 cysteine pairs are disulfide-bonded: cysteine 31-cysteine 65, cysteine 218-cysteine 354, and cysteine 250-cysteine 326. A GXSYXG catalytic site motif motif is present at residues 217-222 (GCSRDG). The active-site Nucleophile is the serine 219. 3 residues coordinate substrate: lysine 223, glutamine 265, and glutamate 273. An N-linked (GlcNAc...) asparagine glycan is attached at asparagine 287. A substrate-binding site is contributed by tryptophan 317. A glycan (N-linked (GlcNAc...) asparagine) is linked at asparagine 350. The active-site Proton donor/acceptor is the histidine 353. Asparagine 390, asparagine 395, and asparagine 401 each carry an N-linked (GlcNAc...) asparagine glycan.

The protein belongs to the carbohydrate esterase 15 (CE15) family.

It is found in the secreted. It catalyses the reaction a 4-O-methyl-alpha-D-glucuronosyl ester derivative + H2O = 4-O-methyl-alpha-D-glucuronate derivative + an alcohol + H(+). Its function is as follows. Glucuronoyl esterase which may play a significant role in biomass degradation, as it is considered to disconnect hemicellulose from lignin through the hydrolysis of the ester bond between 4-O-methyl-D-glucuronic acid residues of glucuronoxylans and aromatic alcohols of lignin. Can hydrolyze benzyl glucuronic acid (BnGlcA), allyl glucuronic acid (allylGlcA) and to a lower degree methyl glucuronic acid (MeGlcA) in vitro. This is 4-O-methyl-glucuronoyl methylesterase 1 from Wolfiporia cocos (strain MD-104) (Brown rot fungus).